The sequence spans 90 residues: Probable Fe(2+)-trafficking protein (90 aa).

This sequence belongs to the Fe(2+)-trafficking protein family.

Could be a mediator in iron transactions between iron acquisition and iron-requiring processes, such as synthesis and/or repair of Fe-S clusters in biosynthetic enzymes. The sequence is that of Probable Fe(2+)-trafficking protein from Photobacterium profundum (strain SS9).